The following is a 369-amino-acid chain: Chorismate synthase (369 aa).

NADP(+) contacts are provided by Arg48 and Arg54. FMN-binding positions include Arg125–Ser127, Asn238–Ala239, Gly278, Lys293–Ser297, and Arg319.

This sequence belongs to the chorismate synthase family. Homotetramer. FMNH2 serves as cofactor.

It carries out the reaction 5-O-(1-carboxyvinyl)-3-phosphoshikimate = chorismate + phosphate. It functions in the pathway metabolic intermediate biosynthesis; chorismate biosynthesis; chorismate from D-erythrose 4-phosphate and phosphoenolpyruvate: step 7/7. In terms of biological role, catalyzes the anti-1,4-elimination of the C-3 phosphate and the C-6 proR hydrogen from 5-enolpyruvylshikimate-3-phosphate (EPSP) to yield chorismate, which is the branch point compound that serves as the starting substrate for the three terminal pathways of aromatic amino acid biosynthesis. This reaction introduces a second double bond into the aromatic ring system. The polypeptide is Chorismate synthase (Cupriavidus necator (strain ATCC 17699 / DSM 428 / KCTC 22496 / NCIMB 10442 / H16 / Stanier 337) (Ralstonia eutropha)).